A 315-amino-acid polypeptide reads, in one-letter code: Porphobilinogen deaminase (315 aa).

C245 is modified (S-(dipyrrolylmethanemethyl)cysteine).

It belongs to the HMBS family. In terms of assembly, monomer. The cofactor is dipyrromethane.

It carries out the reaction 4 porphobilinogen + H2O = hydroxymethylbilane + 4 NH4(+). Its pathway is porphyrin-containing compound metabolism; protoporphyrin-IX biosynthesis; coproporphyrinogen-III from 5-aminolevulinate: step 2/4. It functions in the pathway porphyrin-containing compound metabolism; chlorophyll biosynthesis. Its function is as follows. Tetrapolymerization of the monopyrrole PBG into the hydroxymethylbilane pre-uroporphyrinogen in several discrete steps. The sequence is that of Porphobilinogen deaminase from Prochlorococcus marinus (strain NATL1A).